The primary structure comprises 172 residues: Peptidyl-tRNA hydrolase (172 aa).

Y10 serves as a coordination point for tRNA. H15 acts as the Proton acceptor in catalysis. The tRNA site is built by F59, N61, and N101.

Belongs to the PTH family. Monomer.

It is found in the cytoplasm. It carries out the reaction an N-acyl-L-alpha-aminoacyl-tRNA + H2O = an N-acyl-L-amino acid + a tRNA + H(+). Hydrolyzes ribosome-free peptidyl-tRNAs (with 1 or more amino acids incorporated), which drop off the ribosome during protein synthesis, or as a result of ribosome stalling. Functionally, catalyzes the release of premature peptidyl moieties from peptidyl-tRNA molecules trapped in stalled 50S ribosomal subunits, and thus maintains levels of free tRNAs and 50S ribosomes. This chain is Peptidyl-tRNA hydrolase, found in Rubrobacter xylanophilus (strain DSM 9941 / JCM 11954 / NBRC 16129 / PRD-1).